A 927-amino-acid chain; its full sequence is Huntington interacting protein related 1 (927 aa).

The 130-residue stretch at 7-136 (AREVFVRAQL…TFHNKYPVVP (130 aa)) folds into the ENTH domain. The stretch at 336–524 (RAVEDEKFAK…RESHANQLVQ (189 aa)) forms a coiled coil. The region spanning 673–914 (QTDIDKDVVG…ALRKQHYHMA (242 aa)) is the I/LWEQ domain.

This sequence belongs to the SLA2 family.

It localises to the cytoplasm. The protein resides in the cytoskeleton. In terms of biological role, regulates pre-synaptic vesicle recycling at neuromuscular junctions of mechanosensory neurons. Plays a role in maintaining a normal defecation cycle. The protein is Huntington interacting protein related 1 (hipr-1) of Caenorhabditis elegans.